The sequence spans 436 residues: Ribosome biogenesis protein WDR12 homolog (436 aa).

Residues 13–97 (VRVRFLTKLP…ERVLELEYVK (85 aa)) form a ubiquitin-like (UBL) domain region. WD repeat units lie at residues 109 to 147 (PHDDWVSAVDGSNPSFVLTGCYDGLARIWRDASECTHIL), 149 to 193 (GHSD…SVPK), 203 to 242 (GHTSSVQSVAVDPSTNMICSGSWDNSIKLWSVEGSEEDGD), 273 to 311 (GHTQCVSAVTWPERQTIYSASWDHSVRQWDVQTGKETWN), 313 to 353 (VSGK…TLAP), 359 to 399 (SHKS…PLAS), and 402 to 436 (SHKDKVLCADWWKGDSVISGGADSKLCIASGIEIV). Positions 240 to 262 (DGDTVSVKKRRTNSDSSGPEESL) are disordered.

Belongs to the WD repeat WDR12/YTM1 family.

It is found in the nucleus. The protein resides in the nucleolus. Its subcellular location is the nucleoplasm. In terms of biological role, required for maturation of ribosomal RNAs and formation of the large ribosomal subunit. The protein is Ribosome biogenesis protein WDR12 homolog of Oryza sativa subsp. japonica (Rice).